The sequence spans 398 residues: RNA-binding protein rnc1 (398 aa).

Residues 40–78 (KVSIPTPKPSTPLSTLTNGSTIQQSMTNQPEPTSQVPPI) are disordered. At Thr50 the chain carries Phosphothreonine. Residues 57-76 (NGSTIQQSMTNQPEPTSQVP) are compositionally biased toward polar residues. KH domains follow at residues 93 to 157 (QLTL…YRFI) and 178 to 243 (PRKL…IWEI). Positions 274 to 290 (ASTASPQQVSPPAAPST) are enriched in low complexity. Positions 274–295 (ASTASPQQVSPPAAPSTTSGEA) are disordered. A KH 3 domain is found at 320 to 385 (KVTQNISIPA…EENEKALFLL (66 aa)).

In terms of processing, phosphorylated by pmk1. Phosphorylation causes enhancement of the RNA-binding activity.

Its subcellular location is the cytoplasm. Its function is as follows. Binds and stabilizes pmp1 mRNA and hence acts as a negative regulator of pmk1 signaling. Overexpression suppresses the Cl(-) sensitivity of calcineurin deletion. The protein is RNA-binding protein rnc1 of Schizosaccharomyces pombe (strain 972 / ATCC 24843) (Fission yeast).